A 160-amino-acid polypeptide reads, in one-letter code: Transcription elongation factor GreA (160 aa).

Residues 43–75 (LSENAEYEAAREQQAQMESKIVDLENKLTRASI) adopt a coiled-coil conformation.

It belongs to the GreA/GreB family.

Its function is as follows. Necessary for efficient RNA polymerase transcription elongation past template-encoded arresting sites. The arresting sites in DNA have the property of trapping a certain fraction of elongating RNA polymerases that pass through, resulting in locked ternary complexes. Cleavage of the nascent transcript by cleavage factors such as GreA or GreB allows the resumption of elongation from the new 3'terminus. GreA releases sequences of 2 to 3 nucleotides. The sequence is that of Transcription elongation factor GreA from Prosthecochloris aestuarii (strain DSM 271 / SK 413).